Here is a 327-residue protein sequence, read N- to C-terminus: Arabinose 5-phosphate isomerase KpsF (327 aa).

The SIS domain occupies 48–191 (VLNLIMNCKG…AIAMIHQRKF (144 aa)). 63–68 (GMGKSG) contributes to the ATP binding site. Residues 82–83 (GT), His89, His95, 121–130 (KLVPSLKNFG), and 155–157 (HMA) each bind substrate. Position 89 (His89) interacts with Zn(2+). CBS domains are found at residues 217-273 (MQHD…EGSL) and 282-327 (MTRE…RIFD).

In terms of assembly, homotetramer.

The catalysed reaction is D-arabinose 5-phosphate = D-ribulose 5-phosphate. With respect to regulation, inhibited by 10 uM zinc, cadmium or mercury ions. In terms of biological role, involved in the biosynthesis of K-antigen capsules. Catalyzes the reversible aldol-ketol isomerization between D-ribulose 5-phosphate (Ru5P) and D-arabinose 5-phosphate (A5P). The protein is Arabinose 5-phosphate isomerase KpsF of Escherichia coli O6:H1 (strain CFT073 / ATCC 700928 / UPEC).